The sequence spans 209 residues: Ras-like protein (209 aa).

A GTP-binding site is contributed by 10–17 (GGGLVGKS). The Effector region signature appears at 55 to 63 (YDPTVEDSR). A Phosphothreonine modification is found at Thr58. Residues 79–83 (DTAGQ) and 140–143 (NKAD) contribute to the GTP site. Cys206 carries the post-translational modification Cysteine methyl ester. Cys206 is lipidated: S-geranylgeranyl cysteine. Residues 207 to 209 (LII) constitute a propeptide, removed in mature form.

Belongs to the small GTPase superfamily. Ras family. Phosphorylated in the presence of insulin.

The protein localises to the cell membrane. The enzyme catalyses GTP + H2O = GDP + phosphate + H(+). Its activity is regulated as follows. Alternates between an inactive form bound to GDP and an active form bound to GTP. Activated by a guanine nucleotide-exchange factor (GEF) and inactivated by a GTPase-activating protein (GAP). Its function is as follows. This protein is activated by the insulin/insulin (insulin-like)-receptor system. This transition enables the ras protein to interact with the lectin-receptor/lectin complex, a process which ultimately lead to an initiation of an intra-cellular signal-transduction chain. This is Ras-like protein from Geodia cydonium (Sponge).